We begin with the raw amino-acid sequence, 716 residues long: Translation initiation factor IF-2 (716 aa).

The disordered stretch occupies residues phenylalanine 50–isoleucine 137. Over residues asparagine 92–asparagine 101 the composition is skewed to low complexity. Residues lysine 102–asparagine 118 are compositionally biased toward basic residues. Positions lysine 125–isoleucine 137 are enriched in basic and acidic residues. The tr-type G domain occupies isoleucine 217–lysine 386. The segment at glycine 226 to threonine 233 is G1. Glycine 226–threonine 233 provides a ligand contact to GTP. Residues glycine 251 to histidine 255 form a G2 region. The G3 stretch occupies residues aspartate 272 to glycine 275. Residues aspartate 272 to histidine 276 and asparagine 326 to aspartate 329 contribute to the GTP site. Residues asparagine 326–aspartate 329 are G4. The tract at residues serine 362 to leucine 364 is G5.

It belongs to the TRAFAC class translation factor GTPase superfamily. Classic translation factor GTPase family. IF-2 subfamily.

The protein localises to the cytoplasm. In terms of biological role, one of the essential components for the initiation of protein synthesis. Protects formylmethionyl-tRNA from spontaneous hydrolysis and promotes its binding to the 30S ribosomal subunits. Also involved in the hydrolysis of GTP during the formation of the 70S ribosomal complex. This chain is Translation initiation factor IF-2, found in Bacillus licheniformis (strain ATCC 14580 / DSM 13 / JCM 2505 / CCUG 7422 / NBRC 12200 / NCIMB 9375 / NCTC 10341 / NRRL NRS-1264 / Gibson 46).